A 234-amino-acid polypeptide reads, in one-letter code: Large ribosomal subunit protein uL1 (234 aa).

This sequence belongs to the universal ribosomal protein uL1 family. Part of the 50S ribosomal subunit.

Its function is as follows. Binds directly to 23S rRNA. The L1 stalk is quite mobile in the ribosome, and is involved in E site tRNA release. Functionally, protein L1 is also a translational repressor protein, it controls the translation of the L11 operon by binding to its mRNA. In terms of biological role, peptides originating from the N-terminal end of L1 have antibacterial activity against bacteria such as E.coli and B.megaterium and modest antifungal activities. Has no effect on H.pylori itself. Peptides are not hemolytic against mammalian cells. These peptides may be released in the stomach during altruistic lysis to kill other fast growing bacteria. This chain is Large ribosomal subunit protein uL1, found in Helicobacter pylori (strain ATCC 700392 / 26695) (Campylobacter pylori).